The sequence spans 906 residues: Kinesin-like protein KIN-7G (906 aa).

Positions 26 to 344 (SVAVAVRFRP…LKFAHRAKHI (319 aa)) constitute a Kinesin motor domain. 105–112 (GVTSSGKT) provides a ligand contact to ATP. Coiled coils occupy residues 346–385 (IQAT…RTGT), 733–814 (SDEF…GRNQ), and 839–875 (GDMN…LEKE). The disordered stretch occupies residues 803-840 (RLSSELASGRNQRRGSHGPRGARRESHTKRYEPARRGD). Residues 813 to 823 (NQRRGSHGPRG) are compositionally biased toward basic residues. Positions 824 to 840 (ARRESHTKRYEPARRGD) are enriched in basic and acidic residues.

This sequence belongs to the TRAFAC class myosin-kinesin ATPase superfamily. Kinesin family. KIN-7 subfamily.

The sequence is that of Kinesin-like protein KIN-7G from Oryza sativa subsp. japonica (Rice).